Consider the following 135-residue polypeptide: Succinate dehydrogenase assembly factor 3, mitochondrial (135 aa).

The interval 73–101 (KENSNNNDNYNNNNNDNNNDNNNFINIGQ) is disordered. Over residues 75–95 (NSNNNDNYNNNNNDNNNDNNN) the composition is skewed to low complexity.

Belongs to the complex I LYR family. SDHAF3 subfamily. Interacts with the iron-sulfur protein subunit within the SDH catalytic dimer.

It localises to the mitochondrion matrix. In terms of biological role, plays an essential role in the assembly of succinate dehydrogenase (SDH), an enzyme complex (also referred to as respiratory complex II) that is a component of both the tricarboxylic acid (TCA) cycle and the mitochondrial electron transport chain, and which couples the oxidation of succinate to fumarate with the reduction of ubiquinone (coenzyme Q) to ubiquinol. Promotes maturation of the iron-sulfur protein subunit of the SDH catalytic dimer, protecting it from the deleterious effects of oxidants. May act together with SDHAF1. This is Succinate dehydrogenase assembly factor 3, mitochondrial (acn9) from Dictyostelium discoideum (Social amoeba).